The primary structure comprises 235 residues: Ubiquinone/menaquinone biosynthesis C-methyltransferase UbiE (235 aa).

Thr-60 and Asp-81 together coordinate S-adenosyl-L-methionine.

This sequence belongs to the class I-like SAM-binding methyltransferase superfamily. MenG/UbiE family.

The catalysed reaction is a 2-demethylmenaquinol + S-adenosyl-L-methionine = a menaquinol + S-adenosyl-L-homocysteine + H(+). The enzyme catalyses a 2-methoxy-6-(all-trans-polyprenyl)benzene-1,4-diol + S-adenosyl-L-methionine = a 5-methoxy-2-methyl-3-(all-trans-polyprenyl)benzene-1,4-diol + S-adenosyl-L-homocysteine + H(+). It participates in quinol/quinone metabolism; menaquinone biosynthesis; menaquinol from 1,4-dihydroxy-2-naphthoate: step 2/2. It functions in the pathway cofactor biosynthesis; ubiquinone biosynthesis. In terms of biological role, methyltransferase required for the conversion of demethylmenaquinol (DMKH2) to menaquinol (MKH2) and the conversion of 2-polyprenyl-6-methoxy-1,4-benzoquinol (DDMQH2) to 2-polyprenyl-3-methyl-6-methoxy-1,4-benzoquinol (DMQH2). The chain is Ubiquinone/menaquinone biosynthesis C-methyltransferase UbiE from Geotalea daltonii (strain DSM 22248 / JCM 15807 / FRC-32) (Geobacter daltonii).